Consider the following 371-residue polypeptide: Transcription factor bHLH77 (371 aa).

Disordered regions lie at residues 1 to 25, 65 to 206, and 352 to 371; these read MNMD…FGNG, SGGI…SLAE, and QSNN…KLEP. Positions 85 to 96 are enriched in polar residues; sequence SQPTTQESNKSS. Over residues 128–142 the composition is skewed to low complexity; it reads SPASSSLTASNSKVS. Residues 165–190 show a composition bias toward basic and acidic residues; that stretch reads GVEKCDSKGDNKDDAKPPEAPKDYIH. Residues 197–247 form the bHLH domain; sequence QATDSHSLAERARREKISERMTLLQDLVPGCNRITGKAVMLDEIINYVQSL.

As to quaternary structure, homodimer. Interacts with IBH1. In terms of tissue distribution, expressed constitutively in roots, leaves, stems, and flowers.

It is found in the nucleus. The protein is Transcription factor bHLH77 (BHLH77) of Arabidopsis thaliana (Mouse-ear cress).